The chain runs to 201 residues: MPGIFFSHPNALKEVTNKPDEVMAQKKKNFAVPWKNYLKSMLPHLETIKSSSSSSSSDTEKNKLTPNEIIQWTMSLEKLLVSEEGQAVFRAFLKSEFSEENIEFWLACEDYKATNDSEELRCKANVIYQEFIQPNANKQINIDFSTRNSVTKDLLEPTKATFNGAQKMIFILMERDSYPRFLKSEIFFRLAERHHGNNMRG.

The region spanning 75–191 is the RGS domain; the sequence is SLEKLLVSEE…LKSEIFFRLA (117 aa).

It is found in the cell membrane. The protein localises to the cytoplasm. It localises to the cytosol. Functionally, regulates G protein-coupled receptor signaling cascades, including signaling downstream of the N-formylpeptide chemoattractant receptors and leukotriene receptors. Inhibits B cell chemotaxis. Inhibits signal transduction by increasing the GTPase activity of G protein alpha subunits, thereby driving them into their inactive GDP-bound form. This is Regulator of G-protein signaling 1 (rgs1) from Xenopus laevis (African clawed frog).